The chain runs to 686 residues: Endonuclease GajA (686 aa).

Residues 1–423 (MYLKSLKIYN…NYVTTKNNYT (423 aa)) are ATPase domain. 52–56 (NCGKT) serves as a coordination point for ATP. Residues 463-599 (FFSDAIIFVE…TSFEEAFILT (137 aa)) form a toprim domain region. A divalent metal cation contacts are provided by Glu472, Glu476, Asp559, and Glu604.

Homotetramer. Forms the core of the anti-phage defense complex. Interacts with GajB; 2 GajB dimers dock at opposite sides of the GajA complex to form a 4:4 GajA-GajB assembly (GajAB). GajAB interacts with Bacillus phage Phi3T Gad1 protein; this interaction forms a 4:4:8 GajAB-Gad1 complex and leads to GajAB inhibition. It depends on Mg(2+) as a cofactor.

In terms of biological role, component of antiviral defense system Gabija type II, composed of GajA and GajB. Probably a nicking endonuclease that is strongly inhibited by physiological levels of nucleotides (NTP and dNTP). Expression of Gabija type II in B.subtilis (strain BEST7003) confers resistance to phages phi105, and SpBeta. During viral replication, when nucleotides are rapidly consumed, it is de-suppressed and degrades target DNA. The polypeptide is Endonuclease GajA (Bacillus cereus (strain HuB5-5)).